We begin with the raw amino-acid sequence, 668 residues long: tRNA 5-methylaminomethyl-2-thiouridine biosynthesis bifunctional protein MnmC (668 aa).

The tract at residues Met-1–Glu-245 is tRNA (mnm(5)s(2)U34)-methyltransferase. The tract at residues Ile-270 to Gly-668 is FAD-dependent cmnm(5)s(2)U34 oxidoreductase.

In the N-terminal section; belongs to the methyltransferase superfamily. tRNA (mnm(5)s(2)U34)-methyltransferase family. This sequence in the C-terminal section; belongs to the DAO family. FAD is required as a cofactor.

The protein resides in the cytoplasm. It carries out the reaction 5-aminomethyl-2-thiouridine(34) in tRNA + S-adenosyl-L-methionine = 5-methylaminomethyl-2-thiouridine(34) in tRNA + S-adenosyl-L-homocysteine + H(+). Catalyzes the last two steps in the biosynthesis of 5-methylaminomethyl-2-thiouridine (mnm(5)s(2)U) at the wobble position (U34) in tRNA. Catalyzes the FAD-dependent demodification of cmnm(5)s(2)U34 to nm(5)s(2)U34, followed by the transfer of a methyl group from S-adenosyl-L-methionine to nm(5)s(2)U34, to form mnm(5)s(2)U34. In Escherichia coli O9:H4 (strain HS), this protein is tRNA 5-methylaminomethyl-2-thiouridine biosynthesis bifunctional protein MnmC.